Reading from the N-terminus, the 314-residue chain is Ribosomal RNA small subunit methyltransferase H (314 aa).

S-adenosyl-L-methionine is bound by residues 58–60 (GGH), Asp76, Phe103, Asp119, and Gln126.

It belongs to the methyltransferase superfamily. RsmH family.

The protein localises to the cytoplasm. The catalysed reaction is cytidine(1402) in 16S rRNA + S-adenosyl-L-methionine = N(4)-methylcytidine(1402) in 16S rRNA + S-adenosyl-L-homocysteine + H(+). Its function is as follows. Specifically methylates the N4 position of cytidine in position 1402 (C1402) of 16S rRNA. The protein is Ribosomal RNA small subunit methyltransferase H of Gloeobacter violaceus (strain ATCC 29082 / PCC 7421).